Reading from the N-terminus, the 679-residue chain is Transketolase (679 aa).

Residue histidine 30 coordinates substrate. Thiamine diphosphate-binding positions include histidine 69 and 116–118; that span reads GPL. Aspartate 157 lines the Mg(2+) pocket. Thiamine diphosphate contacts are provided by glycine 158 and asparagine 187. Mg(2+) is bound by residues asparagine 187 and isoleucine 189. Residues histidine 262, arginine 358, and serine 385 each contribute to the substrate site. Histidine 262 provides a ligand contact to thiamine diphosphate. 2 residues coordinate thiamine diphosphate: glutamate 417 and phenylalanine 444. Glutamate 417 (proton donor) is an active-site residue. Positions 468, 476, and 527 each coordinate substrate.

Belongs to the transketolase family. Homodimer. Requires Mg(2+) as cofactor. The cofactor is Ca(2+). Mn(2+) serves as cofactor. Co(2+) is required as a cofactor. It depends on thiamine diphosphate as a cofactor.

The enzyme catalyses D-sedoheptulose 7-phosphate + D-glyceraldehyde 3-phosphate = aldehydo-D-ribose 5-phosphate + D-xylulose 5-phosphate. In terms of biological role, catalyzes the transfer of a two-carbon ketol group from a ketose donor to an aldose acceptor, via a covalent intermediate with the cofactor thiamine pyrophosphate. In Kluyveromyces lactis (strain ATCC 8585 / CBS 2359 / DSM 70799 / NBRC 1267 / NRRL Y-1140 / WM37) (Yeast), this protein is Transketolase (TKL1).